We begin with the raw amino-acid sequence, 172 residues long: RNA silencing suppressor p19 (172 aa).

The segment covering 1–20 has biased composition (basic and acidic residues); it reads MERAIQGNDAREQANSERWD. Residues 1-38 are disordered; the sequence is MERAIQGNDAREQANSERWDGGSGSSTSPFQLPDESPS.

This sequence belongs to the tombusvirus protein p19 family. As to quaternary structure, homodimer.

Viral suppressor of RNA silencing which binds specifically to silencing RNAs (siRNAs). Acts as a molecular caliper to specifically select siRNAs based on the length of the duplex region of the RNA. The polypeptide is RNA silencing suppressor p19 (Tomato bushy stunt virus (strain type) (TBSV)).